The primary structure comprises 232 residues: Histone H1B (232 aa).

The span at Met1–Ala18 shows a compositional bias: low complexity. Disordered regions lie at residues Met1 to Ser44 and Gln99 to Ala232. An H15 domain is found at Thr39–Ala113. Basic residues-rich tracts occupy residues Lys132–Lys141, Lys147–Lys173, Ala181–Ala197, Lys205–Lys214, and Lys222–Ala232.

Belongs to the histone H1/H5 family.

The protein resides in the nucleus. It is found in the chromosome. Functionally, histones H1 are necessary for the condensation of nucleosome chains into higher-order structures. The polypeptide is Histone H1B (Chironomus tentans (Midge)).